The sequence spans 250 residues: 1-(5-phosphoribosyl)-5-[(5-phosphoribosylamino)methylideneamino] imidazole-4-carboxamide isomerase (250 aa).

The active-site Proton acceptor is the D8. D131 functions as the Proton donor in the catalytic mechanism.

Belongs to the HisA/HisF family.

The protein localises to the cytoplasm. It catalyses the reaction 1-(5-phospho-beta-D-ribosyl)-5-[(5-phospho-beta-D-ribosylamino)methylideneamino]imidazole-4-carboxamide = 5-[(5-phospho-1-deoxy-D-ribulos-1-ylimino)methylamino]-1-(5-phospho-beta-D-ribosyl)imidazole-4-carboxamide. The protein operates within amino-acid biosynthesis; L-histidine biosynthesis; L-histidine from 5-phospho-alpha-D-ribose 1-diphosphate: step 4/9. The sequence is that of 1-(5-phosphoribosyl)-5-[(5-phosphoribosylamino)methylideneamino] imidazole-4-carboxamide isomerase from Paraburkholderia phymatum (strain DSM 17167 / CIP 108236 / LMG 21445 / STM815) (Burkholderia phymatum).